A 1396-amino-acid polypeptide reads, in one-letter code: G2/mitotic-specific cyclin-B3 (1396 aa).

Disordered stretches follow at residues 1-64 (MPPP…TNAS), 259-398 (KEKP…PQME), and 477-500 (TTEK…PGEL). Residues 10-34 (SKLETEKAQSNKITPREEQQSEKIG) are compositionally biased toward basic and acidic residues. A D-box motif is present at residues 54–62 (RSVFEDVTN). Positions 264 to 273 (VKKPHFRKKK) are enriched in basic residues. Over residues 306–315 (LQENTNNKDA) the composition is skewed to polar residues. Serine 703 is subject to Phosphoserine. Residues 775-796 (VDEPLSHQSPHIQNHSDTTKEA) form a disordered region. Positions 780–790 (SHQSPHIQNHS) are enriched in polar residues.

The protein belongs to the cyclin family. Cyclin AB subfamily. Interacts with CDK2 kinase. Post-translationally, ubiquitinated. Ubiquitination leads to its degradation during anaphase entry, after degradation of CCNB1. Expressed in testis. Also expressed in the fetal ovary, but not in the adult.

It localises to the nucleus. Functionally, cyclins are positive regulatory subunits of the cyclin-dependent kinases (CDKs), and thereby play an essential role in the control of the cell cycle, notably via their destruction during cell division. Its tissue specificity suggest that it may be required during early meiotic prophase I. This is G2/mitotic-specific cyclin-B3 (Ccnb3) from Mus musculus (Mouse).